A 130-amino-acid chain; its full sequence is Small ribosomal subunit protein uS9 (130 aa).

This sequence belongs to the universal ribosomal protein uS9 family.

The polypeptide is Small ribosomal subunit protein uS9 (Acidovorax ebreus (strain TPSY) (Diaphorobacter sp. (strain TPSY))).